Reading from the N-terminus, the 275-residue chain is Large ribosomal subunit protein uL2 (275 aa).

Disordered stretches follow at residues 36–55 (KQSKNAGRNNSGRITVRHQG) and 223–275 (VAMN…RHKR). The span at 39-48 (KNAGRNNSGR) shows a compositional bias: polar residues. Basic and acidic residues predominate over residues 229–239 (DHPHGGGEGRT).

Belongs to the universal ribosomal protein uL2 family. In terms of assembly, part of the 50S ribosomal subunit. Forms a bridge to the 30S subunit in the 70S ribosome.

One of the primary rRNA binding proteins. Required for association of the 30S and 50S subunits to form the 70S ribosome, for tRNA binding and peptide bond formation. It has been suggested to have peptidyltransferase activity; this is somewhat controversial. Makes several contacts with the 16S rRNA in the 70S ribosome. The sequence is that of Large ribosomal subunit protein uL2 from Aromatoleum aromaticum (strain DSM 19018 / LMG 30748 / EbN1) (Azoarcus sp. (strain EbN1)).